The chain runs to 334 residues: Putative transport protein MTH_1211 (334 aa).

The next 8 membrane-spanning stretches (helical) occupy residues 24–44 (AIVV…AYIV), 60–80 (VSII…LVFT), 84–104 (IINS…PGAG), 131–151 (YVVA…VFLS), 189–209 (VLLS…LMAA), 220–240 (AILL…GPWA), 255–275 (ILRG…DIYL), and 289–309 (MIFL…GFIV).

Belongs to the autoinducer-2 exporter (AI-2E) (TC 2.A.86) family.

It localises to the cell membrane. The polypeptide is Putative transport protein MTH_1211 (Methanothermobacter thermautotrophicus (strain ATCC 29096 / DSM 1053 / JCM 10044 / NBRC 100330 / Delta H) (Methanobacterium thermoautotrophicum)).